Consider the following 99-residue polypeptide: Small ribosomal subunit protein bS20 (99 aa).

It belongs to the bacterial ribosomal protein bS20 family.

Functionally, binds directly to 16S ribosomal RNA. In Thermomicrobium roseum (strain ATCC 27502 / DSM 5159 / P-2), this protein is Small ribosomal subunit protein bS20.